We begin with the raw amino-acid sequence, 365 residues long: Peptide chain release factor 2 (365 aa).

Gln-252 is modified (N5-methylglutamine).

This sequence belongs to the prokaryotic/mitochondrial release factor family. In terms of processing, methylated by PrmC. Methylation increases the termination efficiency of RF2.

It is found in the cytoplasm. Functionally, peptide chain release factor 2 directs the termination of translation in response to the peptide chain termination codons UGA and UAA. In Tolumonas auensis (strain DSM 9187 / NBRC 110442 / TA 4), this protein is Peptide chain release factor 2.